Reading from the N-terminus, the 73-residue chain is Kappa-scoloptoxin SsmTx-I (73 aa).

The signal sequence occupies residues 1–25 (MMMMFSVVSVFLMLLLLKFHDLSMG). Positions 26–37 (EEISLLKKVVRR) are excised as a propeptide. Intrachain disulfides connect Cys45–Cys56 and Cys50–Cys63.

It belongs to the scoloptoxin-04 family. In terms of tissue distribution, expressed by the venom gland.

The protein localises to the secreted. Exhibits highly specific blockage of Kv2.1/KCNB1 (IC(50)=41.7 nM) voltage-gated potassium channels. This blockage is not associated with a significant change in steady-state activation, suggesting that this toxin acts as a channel blocker rather than a gating-modifier. Shows potential analgesic activities in formalin-induced paw licking, thermal pain, and acetic acid-induced abdominal writhing mice models. This chain is Kappa-scoloptoxin SsmTx-I, found in Scolopendra mutilans (Chinese red-headed centipede).